The sequence spans 79 residues: Exodeoxyribonuclease 7 small subunit (79 aa).

It belongs to the XseB family. In terms of assembly, heterooligomer composed of large and small subunits.

It is found in the cytoplasm. It carries out the reaction Exonucleolytic cleavage in either 5'- to 3'- or 3'- to 5'-direction to yield nucleoside 5'-phosphates.. Bidirectionally degrades single-stranded DNA into large acid-insoluble oligonucleotides, which are then degraded further into small acid-soluble oligonucleotides. The protein is Exodeoxyribonuclease 7 small subunit of Dechloromonas aromatica (strain RCB).